A 74-amino-acid chain; its full sequence is Kappa-scoloptoxin(07)-Ssm2e (74 aa).

The N-terminal stretch at 1–19 (MLVFYALLFVSVFSNTVMG) is a signal peptide. Residues 20 to 41 (ATIDMPIPKPILREAIEEIDVN) constitute a propeptide that is removed on maturation.

It belongs to the scoloptoxin-07 family. Contains 3 disulfide bonds. Expressed by the venom gland.

The protein localises to the secreted. In terms of biological role, inhibits voltage-gated potassium channels. This chain is Kappa-scoloptoxin(07)-Ssm2e, found in Scolopendra mutilans (Chinese red-headed centipede).